The sequence spans 95 residues: Co-chaperonin GroES (95 aa).

The protein belongs to the GroES chaperonin family. As to quaternary structure, heptamer of 7 subunits arranged in a ring. Interacts with the chaperonin GroEL.

It localises to the cytoplasm. In terms of biological role, together with the chaperonin GroEL, plays an essential role in assisting protein folding. The GroEL-GroES system forms a nano-cage that allows encapsulation of the non-native substrate proteins and provides a physical environment optimized to promote and accelerate protein folding. GroES binds to the apical surface of the GroEL ring, thereby capping the opening of the GroEL channel. This is Co-chaperonin GroES from Streptococcus equi subsp. equi (strain 4047).